A 295-amino-acid polypeptide reads, in one-letter code: Apolipoprotein E (295 aa).

Residues Met1–Ala18 form the signal peptide. 6 consecutive repeat copies span residues Thr80–Ser101, Pro102–Gly123, Ala124–Gly145, Gln146–Leu167, Thr193–Arg211, and Ala212–Ala233. The interval Thr80–Ala233 is 6 X 22 AA approximate tandem repeats. Met143 bears the Methionine sulfoxide mark. Residue Ser147 is modified to Phosphoserine. The LDL and other lipoprotein receptors binding stretch occupies residues His158–Arg168. Leu162–Arg165 contacts heparin. The segment at Ala191–Met268 is lipid-binding and lipoprotein association. The interval Gln244 to His295 is homooligomerization. Positions Arg256–Met268 are specificity for association with VLDL.

Belongs to the apolipoprotein A1/A4/E family. As to quaternary structure, homotetramer. May interact with ABCA1; functionally associated with ABCA1 in the biogenesis of HDLs. May interact with APP/A4 amyloid-beta peptide; the interaction is extremely stable in vitro but its physiological significance is unclear. May interact with MAPT. May interact with MAP2. In the cerebrospinal fluid, interacts with secreted SORL1. Interacts with PMEL; this allows the loading of PMEL luminal fragment on ILVs to induce fibril nucleation. Post-translationally, APOE exists as multiple glycosylated and sialylated glycoforms within cells and in plasma. The extent of glycosylation and sialylation are tissue and context specific. In terms of processing, glycated in plasma VLDL. Phosphorylated by FAM20C in the extracellular medium.

The protein localises to the secreted. It localises to the extracellular space. The protein resides in the extracellular matrix. Its subcellular location is the extracellular vesicle. It is found in the endosome. The protein localises to the multivesicular body. In terms of biological role, APOE is an apolipoprotein, a protein associating with lipid particles, that mainly functions in lipoprotein-mediated lipid transport between organs via the plasma and interstitial fluids. APOE is a core component of plasma lipoproteins and is involved in their production, conversion and clearance. Apolipoproteins are amphipathic molecules that interact both with lipids of the lipoprotein particle core and the aqueous environment of the plasma. As such, APOE associates with chylomicrons, chylomicron remnants, very low density lipoproteins (VLDL) and intermediate density lipoproteins (IDL) but shows a preferential binding to high-density lipoproteins (HDL). It also binds a wide range of cellular receptors including the LDL receptor/LDLR, the LDL receptor-related proteins LRP1, LRP2 and LRP8 and the very low-density lipoprotein receptor/VLDLR that mediate the cellular uptake of the APOE-containing lipoprotein particles. Finally, APOE also has a heparin-binding activity and binds heparan-sulfate proteoglycans on the surface of cells, a property that supports the capture and the receptor-mediated uptake of APOE-containing lipoproteins by cells. A main function of APOE is to mediate lipoprotein clearance through the uptake of chylomicrons, VLDLs, and HDLs by hepatocytes. APOE is also involved in the biosynthesis by the liver of VLDLs as well as their uptake by peripheral tissues ensuring the delivery of triglycerides and energy storage in muscle, heart and adipose tissues. By participating in the lipoprotein-mediated distribution of lipids among tissues, APOE plays a critical role in plasma and tissues lipid homeostasis. APOE is also involved in two steps of reverse cholesterol transport, the HDLs-mediated transport of cholesterol from peripheral tissues to the liver, and thereby plays an important role in cholesterol homeostasis. First, it is functionally associated with ABCA1 in the biogenesis of HDLs in tissues. Second, it is enriched in circulating HDLs and mediates their uptake by hepatocytes. APOE also plays an important role in lipid transport in the central nervous system, regulating neuron survival and sprouting. The sequence is that of Apolipoprotein E (APOE) from Macaca mulatta (Rhesus macaque).